A 29-amino-acid chain; its full sequence is Conotoxin Bu17 (29 aa).

3 disulfides stabilise this stretch: C4–C19, C5–C25, and C15–C26. Cysteine amide is present on C26.

The protein belongs to the conotoxin M superfamily. Expressed by the venom duct.

Its subcellular location is the secreted. The sequence is that of Conotoxin Bu17 from Conus bullatus (Bubble cone).